The sequence spans 96 residues: Large ribosomal subunit protein bL27 (96 aa).

The propeptide occupies 1–9 (MLRLDLQFF). The disordered stretch occupies residues 14–36 (GVGSTKNGRDSQSKRLGAKRADG).

This sequence belongs to the bacterial ribosomal protein bL27 family. In terms of processing, the N-terminus is cleaved by ribosomal processing cysteine protease Prp.

In Bacillus anthracis (strain A0248), this protein is Large ribosomal subunit protein bL27.